A 347-amino-acid chain; its full sequence is GMP reductase (347 aa).

108 to 131 (ADFAKTAQILALNPALNFVCIDVA) is a binding site for NADP(+). K(+) is bound by residues glycine 181 and glycine 183. The active-site Thioimidate intermediate is cysteine 186. Position 216-239 (216-239 (IVSDGGCTMPGDVAKAFGGGADFV)) interacts with NADP(+).

Belongs to the IMPDH/GMPR family. GuaC type 1 subfamily. In terms of assembly, homotetramer.

It carries out the reaction IMP + NH4(+) + NADP(+) = GMP + NADPH + 2 H(+). In terms of biological role, catalyzes the irreversible NADPH-dependent deamination of GMP to IMP. It functions in the conversion of nucleobase, nucleoside and nucleotide derivatives of G to A nucleotides, and in maintaining the intracellular balance of A and G nucleotides. The protein is GMP reductase of Salmonella arizonae (strain ATCC BAA-731 / CDC346-86 / RSK2980).